The chain runs to 544 residues: CTP synthase (544 aa).

Residues 1-265 (MTKFIFVTGG…DNIITEQLQL (265 aa)) form an amidoligase domain region. Ser-13 lines the CTP pocket. Ser-13 lines the UTP pocket. ATP contacts are provided by residues 14–19 (SLGKGI) and Asp-71. Residues Asp-71 and Glu-139 each coordinate Mg(2+). CTP is bound by residues 146-148 (DIE), 186-191 (KTKPTQ), and Lys-222. Residues 186-191 (KTKPTQ) and Lys-222 each bind UTP. In terms of domain architecture, Glutamine amidotransferase type-1 spans 290-544 (KIAMVGKYVD…VKAALNNKKA (255 aa)). Gly-353 lines the L-glutamine pocket. The active-site Nucleophile; for glutamine hydrolysis is the Cys-380. Residues 381–384 (LGMQ), Glu-404, and Arg-471 contribute to the L-glutamine site. Active-site residues include His-517 and Glu-519.

Belongs to the CTP synthase family. Homotetramer.

The catalysed reaction is UTP + L-glutamine + ATP + H2O = CTP + L-glutamate + ADP + phosphate + 2 H(+). The enzyme catalyses L-glutamine + H2O = L-glutamate + NH4(+). It carries out the reaction UTP + NH4(+) + ATP = CTP + ADP + phosphate + 2 H(+). The protein operates within pyrimidine metabolism; CTP biosynthesis via de novo pathway; CTP from UDP: step 2/2. Its activity is regulated as follows. Allosterically activated by GTP, when glutamine is the substrate; GTP has no effect on the reaction when ammonia is the substrate. The allosteric effector GTP functions by stabilizing the protein conformation that binds the tetrahedral intermediate(s) formed during glutamine hydrolysis. Inhibited by the product CTP, via allosteric rather than competitive inhibition. Functionally, catalyzes the ATP-dependent amination of UTP to CTP with either L-glutamine or ammonia as the source of nitrogen. Regulates intracellular CTP levels through interactions with the four ribonucleotide triphosphates. The chain is CTP synthase from Neisseria meningitidis serogroup B (strain ATCC BAA-335 / MC58).